We begin with the raw amino-acid sequence, 178 residues long: Inner membrane-spanning protein YciB (178 aa).

5 helical membrane passes run 10-30 (IVLF…AVLM), 47-67 (LQTM…LTLA), 76-96 (WKPT…LWAL), 121-141 (WAWI…VLHW), and 151-171 (LWGY…IAPH).

The protein belongs to the YciB family.

It localises to the cell inner membrane. Its function is as follows. Plays a role in cell envelope biogenesis, maintenance of cell envelope integrity and membrane homeostasis. In Verminephrobacter eiseniae (strain EF01-2), this protein is Inner membrane-spanning protein YciB.